The sequence spans 295 residues: MAVSFQTKNPLRPITNIPRSYGPTRVRVTCSVTTTNPQLNHENLVVEKRLVNPPLSKNNDPTLQSTWTHRLWVAAGSTTIFASFAKSIIGGFGSHLWLQPALACYAGYVFADLGSGVYHWAIDNYGGASTPIVGAQLEASQGHHKYPWTITKRQFANNSYTIARAITFIVLPLNLAINNPLFHSFVSTFAFCILLSQQFHAWAHGTKSKLPPLVMALQDMGLLVSRKDHPGHHQAPYNSNYCVVSGAWNKVLDESNLFKALEMALFFQFGVRPNSWNEPNSDWTEETETNFFTKI.

Residues 1–29 (MAVSFQTKNPLRPITNIPRSYGPTRVRVT) constitute a chloroplast transit peptide. 3 helical membrane-spanning segments follow: residues 72–92 (WVAAGSTTIFASFAKSIIGGF), 102–122 (LACYAGYVFADLGSGVYHWAI), and 175–195 (LAINNPLFHSFVSTFAFCILL).

This sequence belongs to the fatty acid desaturase CarF family.

Its subcellular location is the plastid. It is found in the chloroplast membrane. It functions in the pathway lipid metabolism; fatty acid metabolism. Its function is as follows. Fatty acid desaturase involved in the production of chloroplast-specific phosphatidylglycerol molecular species. Catalyzes the formation of a trans double bond introduced close to the carboxyl group of palmitic acid, which is specifically esterified to the sn-2 glyceryl carbon of phosphatidylglycerol. The sequence is that of Fatty acid desaturase 4-like 1, chloroplastic (FAD4L1) from Arabidopsis thaliana (Mouse-ear cress).